Consider the following 653-residue polypeptide: Amyloid beta A4 precursor protein-binding family B member 1-interacting protein (653 aa).

The tract at residues 82–141 (NNKSTAPFPPADASNSYHFHPPPMPSIITEDLSLLPPPPEFDPHYPPPPPDPLTEPKTQE) is disordered. A compositionally biased stretch (pro residues) spans 116–134 (LPPPPEFDPHYPPPPPDPL). In terms of domain architecture, Ras-associating spans 165 to 253 (KKRIVKVHMI…IHFLEKNEKY (89 aa)). One can recognise a PH domain in the interval 295-404 (VPELEAALYL…WVTGIRIAKY (110 aa)). Basic and acidic residues predominate over residues 462 to 481 (KHGEANKQEKKSSEVNKPET). A disordered region spans residues 462–653 (KHGEANKQEK…ALQKKREPPT (192 aa)). A compositionally biased stretch (pro residues) spans 585–604 (PAPPPPPPPPAPAANVPPLP). Positions 605–614 (VKKHPPKPPK) are enriched in basic residues.

It belongs to the MRL family.

The protein localises to the cell membrane. It is found in the cytoplasm. Its subcellular location is the cytoskeleton. Appears to function in the signal transduction from Ras activation to actin cytoskeletal remodeling. The protein is Amyloid beta A4 precursor protein-binding family B member 1-interacting protein (apbb1ip) of Xenopus laevis (African clawed frog).